The primary structure comprises 490 residues: GTPase Der (490 aa).

The region spanning 3–166 is the EngA-type G 1 domain; that stretch reads PVIALVGRPN…IALSEFPKDD (164 aa). GTP contacts are provided by residues 9-16, 56-60, and 118-121; these read GRPNVGKS, DTGGI, and NKVD. Positions 164–191 are disordered; it reads KDDADEPEEGEEEIVAEGEEAKRIPGPS. The segment covering 166 to 181 has biased composition (acidic residues); it reads DADEPEEGEEEIVAEG. A compositionally biased stretch (basic and acidic residues) spans 182–191; that stretch reads EEAKRIPGPS. The EngA-type G 2 domain occupies 196 to 369; that stretch reads IKIAIIGRPN…SVQNSFKSAV (174 aa). GTP contacts are provided by residues 202–209, 249–253, and 314–317; these read GRPNVGKS, DTAGV, and NKWD. Residues 370-454 form the KH-like domain; sequence TRWPTSRLTQ…PIRIEFKGGE (85 aa). The tract at residues 452–490 is disordered; it reads GGENPYEGNKNTLTDRQVNKKRRLMSHHKKADKKRRDKR. Basic residues predominate over residues 470–490; sequence NKKRRLMSHHKKADKKRRDKR.

The protein belongs to the TRAFAC class TrmE-Era-EngA-EngB-Septin-like GTPase superfamily. EngA (Der) GTPase family. As to quaternary structure, associates with the 50S ribosomal subunit.

GTPase that plays an essential role in the late steps of ribosome biogenesis. This Pseudomonas fluorescens (strain ATCC BAA-477 / NRRL B-23932 / Pf-5) protein is GTPase Der.